The sequence spans 96 residues: Non-specific lipid-transfer protein 2G (96 aa).

The N-terminal stretch at Met-1–Ala-29 is a signal peptide. 4 cysteine pairs are disulfide-bonded: Cys-31–Cys-63, Cys-39–Cys-53, Cys-54–Cys-89, and Cys-65–Cys-96.

Its subcellular location is the secreted. The protein localises to the cell wall. In terms of biological role, transfer lipids across membranes. May play a role in plant defense or in the biosynthesis of cuticle layers. The polypeptide is Non-specific lipid-transfer protein 2G (Triticum aestivum (Wheat)).